The following is a 445-amino-acid chain: GTPase Obg (445 aa).

The Obg domain maps to 7 to 164 (PEFVDCVTVE…RKLRLEVKSI (158 aa)). Positions 165 to 342 (ADVALVGFPS…FTLRLGEICQ (178 aa)) constitute an OBG-type G domain. GTP is bound by residues 171–178 (GFPSVGKS), 196–200 (FTTLH), 217–220 (DVPG), 291–294 (NKID), and 323–325 (SAV). Mg(2+) is bound by residues Ser178 and Thr198. An OCT domain is found at 357 to 434 (IPAKNTPEFS…IGGVIFTWDP (78 aa)).

This sequence belongs to the TRAFAC class OBG-HflX-like GTPase superfamily. OBG GTPase family. Monomer. Requires Mg(2+) as cofactor.

The protein localises to the cytoplasm. Its function is as follows. An essential GTPase which binds GTP, GDP and possibly (p)ppGpp with moderate affinity, with high nucleotide exchange rates and a fairly low GTP hydrolysis rate. Plays a role in control of the cell cycle, stress response, ribosome biogenesis and in those bacteria that undergo differentiation, in morphogenesis control. This Tropheryma whipplei (strain Twist) (Whipple's bacillus) protein is GTPase Obg.